The primary structure comprises 105 residues: ATP-dependent Clp protease adapter protein ClpS (105 aa).

The segment at Met1 to Val27 is disordered.

The protein belongs to the ClpS family. In terms of assembly, binds to the N-terminal domain of the chaperone ClpA.

Functionally, involved in the modulation of the specificity of the ClpAP-mediated ATP-dependent protein degradation. The chain is ATP-dependent Clp protease adapter protein ClpS from Mycolicibacterium paratuberculosis (strain ATCC BAA-968 / K-10) (Mycobacterium paratuberculosis).